A 267-amino-acid polypeptide reads, in one-letter code: Hydroxynaphthalene reductase-like protein Arp2 (267 aa).

I25, N45, D71, and N98 together coordinate NADP(+). Active-site proton donor residues include S147 and S148. Residues Y162, K166, V195, and T197 each contribute to the NADP(+) site. Y162 serves as the catalytic Proton acceptor. K166 functions as the Lowers pKa of active site Tyr in the catalytic mechanism.

This sequence belongs to the short-chain dehydrogenases/reductases (SDR) family.

In terms of biological role, hydroxynaphthalene reductase-like protein; part of the Pks2 gene cluster that mediates the formation of infectious structures (appressoria), enabling these fungi to kill insects faster. The product of the Pks2 gene cluster is different from the one of Pks1 and has still not been identified. The protein is Hydroxynaphthalene reductase-like protein Arp2 of Metarhizium acridum (strain CQMa 102).